The following is a 330-amino-acid chain: Phosphate acyltransferase (330 aa).

Belongs to the PlsX family. As to quaternary structure, homodimer. Probably interacts with PlsY.

It localises to the cytoplasm. The catalysed reaction is a fatty acyl-[ACP] + phosphate = an acyl phosphate + holo-[ACP]. It functions in the pathway lipid metabolism; phospholipid metabolism. Its function is as follows. Catalyzes the reversible formation of acyl-phosphate (acyl-PO(4)) from acyl-[acyl-carrier-protein] (acyl-ACP). This enzyme utilizes acyl-ACP as fatty acyl donor, but not acyl-CoA. The protein is Phosphate acyltransferase of Campylobacter hominis (strain ATCC BAA-381 / DSM 21671 / CCUG 45161 / LMG 19568 / NCTC 13146 / CH001A).